A 372-amino-acid polypeptide reads, in one-letter code: Solute carrier family 35 member F6 (372 aa).

The signal sequence occupies residues 1–18 (MAWTKYQLFLAGLMLVTG). Transmembrane regions (helical) follow at residues 48-68 (FVQA…FYLL) and 89-109 (LLFL…YVAL). Residues 105–160 (MYVALNMTSASSFQMLRGAVIIFTGLFSVAFLDRRLVPSQWLGILITIAGLVVVGL) enclose the EamA domain. A glycan (N-linked (GlcNAc...) asparagine) is linked at asparagine 110. Helical transmembrane passes span 116 to 136 (SFQM…VAFL), 145 to 165 (WLGI…DLLS), 176 to 196 (VITG…QMVL), 211 to 231 (AVGI…VPMY), 261 to 281 (LIAL…FSGI), 293 to 312 (MVLD…ALGW), and 320 to 336 (ILGF…YNGL). Threonine 366 carries the post-translational modification Phosphothreonine.

It belongs to the SLC35F solute transporter family. As to quaternary structure, interacts with SLC25A5.

It localises to the mitochondrion. The protein resides in the lysosome membrane. In terms of biological role, involved in the maintenance of mitochondrial membrane potential in pancreatic ductal adenocarcinoma (PDAC) cells. Promotes pancreatic ductal adenocarcinoma (PDAC) cell growth. May play a role as a nucleotide-sugar transporter. This is Solute carrier family 35 member F6 (Slc35f6) from Rattus norvegicus (Rat).